An 84-amino-acid polypeptide reads, in one-letter code: Cytochrome b559 subunit alpha (84 aa).

A helical membrane pass occupies residues 22–36 (IIHSITIPSLFVAGF). Residue His24 coordinates heme.

Belongs to the PsbE/PsbF family. As to quaternary structure, heterodimer of an alpha subunit and a beta subunit. PSII is composed of 1 copy each of membrane proteins PsbA, PsbB, PsbC, PsbD, PsbE, PsbF, PsbH, PsbI, PsbJ, PsbK, PsbL, PsbM, PsbT, PsbX, PsbY, PsbZ, Psb30/Ycf12, at least 3 peripheral proteins of the oxygen-evolving complex and a large number of cofactors. It forms dimeric complexes. It depends on heme b as a cofactor.

It is found in the plastid. Its subcellular location is the chloroplast thylakoid membrane. In terms of biological role, this b-type cytochrome is tightly associated with the reaction center of photosystem II (PSII). PSII is a light-driven water:plastoquinone oxidoreductase that uses light energy to abstract electrons from H(2)O, generating O(2) and a proton gradient subsequently used for ATP formation. It consists of a core antenna complex that captures photons, and an electron transfer chain that converts photonic excitation into a charge separation. The sequence is that of Cytochrome b559 subunit alpha from Emiliania huxleyi (Coccolithophore).